The chain runs to 141 residues: Large ribosomal subunit protein uL11 (141 aa).

This sequence belongs to the universal ribosomal protein uL11 family. In terms of assembly, part of the ribosomal stalk of the 50S ribosomal subunit. Interacts with L10 and the large rRNA to form the base of the stalk. L10 forms an elongated spine to which L12 dimers bind in a sequential fashion forming a multimeric L10(L12)X complex. One or more lysine residues are methylated.

Its function is as follows. Forms part of the ribosomal stalk which helps the ribosome interact with GTP-bound translation factors. In Latilactobacillus sakei subsp. sakei (strain 23K) (Lactobacillus sakei subsp. sakei), this protein is Large ribosomal subunit protein uL11.